A 769-amino-acid chain; its full sequence is Neutral alpha-glucosidase C (769 aa).

Catalysis depends on aspartate 366, which acts as the Nucleophile. The active site involves glutamate 369. Aspartate 442 acts as the Proton donor in catalysis.

Belongs to the glycosyl hydrolase 31 family.

The catalysed reaction is Hydrolysis of terminal, non-reducing (1-&gt;4)-linked alpha-D-glucose residues with release of alpha-D-glucose.. Functionally, has alpha-glucosidase activity. The polypeptide is Neutral alpha-glucosidase C (GANC) (Macaca fascicularis (Crab-eating macaque)).